Reading from the N-terminus, the 705-residue chain is Elongation factor G (705 aa).

The 283-residue stretch at 8 to 290 folds into the tr-type G domain; that stretch reads ERYRNFGIMA…GVVHLLPSPA (283 aa). Residues 17–24, 88–92, and 142–145 contribute to the GTP site; these read AHIDAGKT, DTPGH, and NKMD. Positions 290–309 are disordered; the sequence is ADRPPVQGIDEDEKEDTRAA.

The protein belongs to the TRAFAC class translation factor GTPase superfamily. Classic translation factor GTPase family. EF-G/EF-2 subfamily.

It is found in the cytoplasm. Its function is as follows. Catalyzes the GTP-dependent ribosomal translocation step during translation elongation. During this step, the ribosome changes from the pre-translocational (PRE) to the post-translocational (POST) state as the newly formed A-site-bound peptidyl-tRNA and P-site-bound deacylated tRNA move to the P and E sites, respectively. Catalyzes the coordinated movement of the two tRNA molecules, the mRNA and conformational changes in the ribosome. This is Elongation factor G from Xanthomonas oryzae pv. oryzae (strain MAFF 311018).